The primary structure comprises 238 residues: Lipoprotein-releasing system ATP-binding protein LolD (238 aa).

Positions 6 to 238 (LVCQGIRKVY…RSSLAQEMEA (233 aa)) constitute an ABC transporter domain. 42–49 (GSSGSGKS) is an ATP binding site.

The protein belongs to the ABC transporter superfamily. Lipoprotein translocase (TC 3.A.1.125) family. The complex is composed of two ATP-binding proteins (LolD) and two transmembrane proteins (LolC and LolE).

The protein localises to the cell inner membrane. Functionally, part of the ABC transporter complex LolCDE involved in the translocation of mature outer membrane-directed lipoproteins, from the inner membrane to the periplasmic chaperone, LolA. Responsible for the formation of the LolA-lipoprotein complex in an ATP-dependent manner. The chain is Lipoprotein-releasing system ATP-binding protein LolD from Aliivibrio fischeri (strain ATCC 700601 / ES114) (Vibrio fischeri).